The primary structure comprises 196 residues: NADH-quinone oxidoreductase subunit B (196 aa).

[4Fe-4S] cluster-binding residues include C63, C64, C129, and C159.

It belongs to the complex I 20 kDa subunit family. NDH-1 is composed of 14 different subunits. Subunits NuoB, C, D, E, F, and G constitute the peripheral sector of the complex. The cofactor is [4Fe-4S] cluster.

The protein resides in the cell inner membrane. The enzyme catalyses a quinone + NADH + 5 H(+)(in) = a quinol + NAD(+) + 4 H(+)(out). Functionally, NDH-1 shuttles electrons from NADH, via FMN and iron-sulfur (Fe-S) centers, to quinones in the respiratory chain. The immediate electron acceptor for the enzyme in this species is believed to be a menaquinone. Couples the redox reaction to proton translocation (for every two electrons transferred, four hydrogen ions are translocated across the cytoplasmic membrane), and thus conserves the redox energy in a proton gradient. The chain is NADH-quinone oxidoreductase subunit B from Bacteroides fragilis (strain ATCC 25285 / DSM 2151 / CCUG 4856 / JCM 11019 / LMG 10263 / NCTC 9343 / Onslow / VPI 2553 / EN-2).